Here is a 113-residue protein sequence, read N- to C-terminus: Large ribosomal subunit protein bL19 (113 aa).

The protein belongs to the bacterial ribosomal protein bL19 family.

In terms of biological role, this protein is located at the 30S-50S ribosomal subunit interface and may play a role in the structure and function of the aminoacyl-tRNA binding site. The sequence is that of Large ribosomal subunit protein bL19 from Rhodococcus jostii (strain RHA1).